The following is a 389-amino-acid chain: MRDWKRLHATLDAAREGREMTVPEAAFLLGQTDPAARELVRSAADRLRAELVGERVSYVINRNINFSNICVQHCSFCAFRRDAQEAGAYSLDFAHILQKTAEAVASGATEICMQGGLNPAVRGAGGRVLDYYLQLVDAIKAPFPRIHLHAFSPQESFFIAREDRLPIETVLAELRAAGVDSMPGTAAEVLHEPVRRRLCPEKLSTLAWVRTVEAAHRTGLPMTSTMLSGHIETAMHRAIHLGVLRTIQKRTGGFTEFVLLPYVGLAAPRALRARVGRDQPELADALLTQAVARLFFGRSLVNHQPSWVKLGLEGAGEALRWGCNDIGGTLMEEHITSMAGARGGTCQTPEALRAAVFQAERTAYQRDTLYQEVAAESIQPAASLKSAAR.

Residues 56–298 (VSYVINRNIN…QAVARLFFGR (243 aa)) enclose the Radical SAM core domain. Positions 70, 74, and 77 each coordinate [4Fe-4S] cluster.

The protein belongs to the radical SAM superfamily. CofH family. As to quaternary structure, consists of two subunits, CofG and CofH. It depends on [4Fe-4S] cluster as a cofactor.

The catalysed reaction is 5-amino-6-(D-ribitylamino)uracil + L-tyrosine + S-adenosyl-L-methionine = 5-amino-5-(4-hydroxybenzyl)-6-(D-ribitylimino)-5,6-dihydrouracil + 2-iminoacetate + 5'-deoxyadenosine + L-methionine + H(+). The protein operates within cofactor biosynthesis; coenzyme F0 biosynthesis. Catalyzes the radical-mediated synthesis of 5-amino-5-(4-hydroxybenzyl)-6-(D-ribitylimino)-5,6-dihydrouracil from 5-amino-6-(D-ribitylamino)uracil and L-tyrosine. The chain is 5-amino-6-(D-ribitylamino)uracil--L-tyrosine 4-hydroxyphenyl transferase from Gloeobacter violaceus (strain ATCC 29082 / PCC 7421).